Here is an 89-residue protein sequence, read N- to C-terminus: Bombyxin B-2 (89 aa).

The signal sequence occupies residues 1 to 19; sequence MKTSVMFMLVFVISLMCSS. 3 cysteine pairs are disulfide-bonded: Cys29–Cys75, Cys41–Cys88, and Cys74–Cys79. The propeptide at 48 to 66 is c peptide like; the sequence is SGAQYAPYFWTRQYLGSRG.

Belongs to the insulin family. Heterodimer of a B chain and an A chain linked by two disulfide bonds.

Its subcellular location is the secreted. In terms of biological role, brain peptide responsible for activation of prothoracic glands to produce ecdysone in insects. The sequence is that of Bombyxin B-2 (BBXB2) from Bombyx mori (Silk moth).